A 144-amino-acid polypeptide reads, in one-letter code: Granulocyte-macrophage colony-stimulating factor (144 aa).

The N-terminal stretch at 1–17 (MWLQNLLLLGTVVCSIS) is a signal peptide. O-linked (GalNAc...) serine glycosylation is present at Ser24. Thr27 carries an O-linked (GalNAc...) threonine glycan. Residues Asn44, Asn47, and Asn54 are each glycosylated (N-linked (GlcNAc...) asparagine). Cystine bridges form between Cys71–Cys113 and Cys105–Cys138.

The protein belongs to the GM-CSF family. As to quaternary structure, monomer. The signaling GM-CSF receptor complex is a dodecamer of two head-to-head hexamers of two alpha, two beta, and two ligand subunits.

It localises to the secreted. Its function is as follows. Cytokine that stimulates the growth and differentiation of hematopoietic precursor cells from various lineages, including granulocytes, macrophages, eosinophils and erythrocytes. The protein is Granulocyte-macrophage colony-stimulating factor (CSF2) of Sus scrofa (Pig).